Here is a 149-residue protein sequence, read N- to C-terminus: Large ribosomal subunit protein uL15C (149 aa).

Residues Arg21 to His40 are disordered.

Belongs to the universal ribosomal protein uL15 family. In terms of assembly, component of the large ribosomal subunit.

Its subcellular location is the cytoplasm. The protein localises to the cytosol. It is found in the endoplasmic reticulum. In terms of biological role, component of the large ribosomal subunit. The ribosome is a large ribonucleoprotein complex responsible for the synthesis of proteins in the cell. The protein is Large ribosomal subunit protein uL15C (rpl27a-3) of Entamoeba histolytica (strain ATCC 30459 / HM-1:IMSS / ABRM).